The sequence spans 925 residues: Serine/threonine-protein phosphatase 1 regulatory subunit 10 (925 aa).

Residues 1 to 348 form an interaction with TOX4 region; it reads MGSGPIDPKE…EPAPPSEAMD (348 aa). A TFIIS N-terminal domain is found at 73 to 147; it reads KLLNNWLTYS…SDWMAVIRSQ (75 aa). Residues 147-211 are disordered; sequence QSSTQPAEKD…APSHAKFRST (65 aa). Basic and acidic residues-rich tracts occupy residues 153–166 and 174–196; these read AEKD…EGKS and PLTE…EKPK. Glycyl lysine isopeptide (Lys-Gly) (interchain with G-Cter in SUMO2) cross-links involve residues Lys-179 and Lys-262. 3 disordered regions span residues 304-398, 536-555, and 587-890; these read KIKK…KRKT, TLEP…SKLP, and SIMG…HGGD. Ser-313 carries the phosphoserine modification. The span at 325 to 336 shows a compositional bias: low complexity; the sequence is KTSTEPSTAKPS. Residues 357 to 433 form a necessary for interaction with PPP1CA region; it reads PPVEVPELMD…NKIKDFGEAA (77 aa). The residue at position 382 (Ser-382) is a Phosphoserine. The tract at residues 393–408 is necessary for interaction with PPP1CC; sequence GRKRKTVTWPEEGKLR. Positions 394–423 match the PP1-binding motif motif; it reads RKRKTVTWPEEGKLREYFYFELDETERVNV. Thr-398 is subject to Phosphothreonine; by PKA. An interaction with WDR82 region spans residues 418–619; sequence TERVNVNKIK…IKQMLVPHGL (202 aa). Gly residues predominate over residues 540-551; it reads GGAGGSPDGAGG. 2 positions are modified to phosphoserine: Ser-545 and Ser-591. Over residues 596–611 the composition is skewed to basic and acidic residues; that stretch reads PSEELLKQPDYSDKIK. Residues 644–655 show a composition bias toward pro residues; sequence PPGPGGPMPGPH. The span at 656–665 shows a compositional bias: gly residues; the sequence is GGPGGPGGPV. Arg-668 carries the post-translational modification Omega-N-methylarginine. The segment covering 679–693 has biased composition (low complexity); it reads GDPFWDGPGDPMRGG. An omega-N-methylarginine mark is found at Arg-696 and Arg-741. Gly residues-rich tracts occupy residues 728 to 766 and 775 to 829; these read ARGG…GMSS and GPGG…AGGG. 2 stretches are compositionally biased toward basic and acidic residues: residues 846–871 and 879–890; these read PHDV…HDGP and RGHDGGHNHGGD. Residues 891 to 919 form a C3H1-type zinc finger; sequence MSKRPVCRHFMMKGNCRYENNCAFYHPGV.

As to quaternary structure, component of the PNUTS-PP1 complex (also named PTW/PP1 complex), composed of PPP1R10/PNUTS, TOX4, WDR82, and PPP1CA (or PPP1CB or PPP1CC). Post-translationally, phosphorylated on Ser-398 by PKA within the region necessary for interaction with PPP1CA.

The protein localises to the nucleus. It localises to the chromosome. Its function is as follows. Substrate-recognition component of the PNUTS-PP1 protein phosphatase complex, a protein phosphatase 1 (PP1) complex that promotes RNA polymerase II transcription pause-release, allowing transcription elongation. Promoter-proximal pausing by RNA polymerase II is a transcription halt following transcription initiation but prior to elongation, which acts as a checkpoint to control that transcripts are favorably configured for transcriptional elongation. The PNUTS-PP1 complex mediates the release of RNA polymerase II from promoter-proximal region of genes by catalyzing dephosphorylation of proteins involved in transcription, such as AFF4, CDK9, MEPCE, INTS12, NCBP1, POLR2M/GDOWN1 and SUPT6H. The PNUTS-PP1 complex also regulates RNA polymerase II transcription termination by mediating dephosphorylation of SUPT5H in termination zones downstream of poly(A) sites, thereby promoting deceleration of RNA polymerase II transcription. PNUTS-PP1 complex is also involved in the response to replication stress by mediating dephosphorylation of POLR2A at 'Ser-5' of the CTD, promoting RNA polymerase II degradation. The PNUTS-PP1 complex also plays a role in the control of chromatin structure and cell cycle progression during the transition from mitosis into interphase. PNUTS-PP1 complex mediates dephosphorylation of MYC, promoting MYC stability by preventing MYC ubiquitination by the SCF(FBXW7) complex. In addition to acts as a substrate-recognition component, PPP1R10/PNUTS also acts as a nuclear targeting subunit for the PNUTS-PP1 complex. In some context, PPP1R10/PNUTS also acts as an inhibitor of protein phosphatase 1 (PP1) activity by preventing access to substrates, such as RB. This chain is Serine/threonine-protein phosphatase 1 regulatory subunit 10 (PPP1R10), found in Sus scrofa (Pig).